The primary structure comprises 233 residues: MSKDIPTPYMWSFQPQMGLAAGAAQDYSSKMNWLSAGPHMISRVNGVRARRNQILLEQAALTATPRNQLNPPSWPAALIYQENPPPTTVLLPRDAQAEVHMTNAGAQLAGGARHSFRYKGRTEPYPSPAIKRVLIRGKGIQLNDEVTSPLGVRPDGVFQLGGSGRSSFTARQAYLTLQSSSSAPRSGGIGTLQFVEEFTPSVYFNPFSGSPGHYPDAFIPNFDAVSESVDGYD.

Thr-64 is modified (phosphothreonine; by host). The propeptide occupies 112-163 (ARHSFRYKGRTEPYPSPAIKRVLIRGKGIQLNDEVTSPLGVRPDGVFQLGGS). A Phosphoserine; by host modification is found at Ser-180.

It belongs to the adenoviridae hexon-linking protein family. As to quaternary structure, interacts with the peripentonal hexons as well as the hexons in the facets. Part of a complex composed of the core-capsid bridging protein, the endosome lysis protein VI and the hexon-linking protein VIII; these interactions bridge the virus core to the capsid. Post-translationally, cleaved by the viral protease during virion maturation. May cause the middle segment to be shed from the capsid.

The protein resides in the virion. The protein localises to the host nucleus. Functionally, structural component of the virion that acts as a cement protein on the capsid interior and which glue the peripentonal hexons and group-of-nine hexons together. This chain is Pre-hexon-linking protein VIII, found in Homo sapiens (Human).